The following is a 130-amino-acid chain: Small ribosomal subunit protein uS8 (130 aa).

This sequence belongs to the universal ribosomal protein uS8 family. In terms of assembly, part of the 30S ribosomal subunit. Contacts proteins S5 and S12.

In terms of biological role, one of the primary rRNA binding proteins, it binds directly to 16S rRNA central domain where it helps coordinate assembly of the platform of the 30S subunit. This is Small ribosomal subunit protein uS8 from Klebsiella pneumoniae (strain 342).